Reading from the N-terminus, the 158-residue chain is Cyclic pyranopterin monophosphate synthase (158 aa).

Substrate is bound by residues 76–78 and 114–115; these read LCH and ME. Residue D129 is part of the active site.

It belongs to the MoaC family. In terms of assembly, homohexamer; trimer of dimers.

The catalysed reaction is (8S)-3',8-cyclo-7,8-dihydroguanosine 5'-triphosphate = cyclic pyranopterin phosphate + diphosphate. It participates in cofactor biosynthesis; molybdopterin biosynthesis. Functionally, catalyzes the conversion of (8S)-3',8-cyclo-7,8-dihydroguanosine 5'-triphosphate to cyclic pyranopterin monophosphate (cPMP). This is Cyclic pyranopterin monophosphate synthase from Shewanella frigidimarina (strain NCIMB 400).